Reading from the N-terminus, the 119-residue chain is Virulence protein VsdF (119 aa).

Its function is as follows. Expressed but non-essential protein, involved in the virulence of Salmonellas. The polypeptide is Virulence protein VsdF (vsdF) (Salmonella dublin).